A 76-amino-acid chain; its full sequence is MKQIFNKLKWTGKKAYFWYVSRGGAGGEEVASTDDVVEVGSEGLVIRVGSQERYIPYHRIVEIRLESGEVLLNRRK.

It belongs to the UPF0248 family.

The chain is UPF0248 protein PAE2518 from Pyrobaculum aerophilum (strain ATCC 51768 / DSM 7523 / JCM 9630 / CIP 104966 / NBRC 100827 / IM2).